A 316-amino-acid chain; its full sequence is Bifunctional riboflavin kinase/FMN adenylyltransferase (316 aa).

The protein belongs to the RibF family.

The enzyme catalyses riboflavin + ATP = FMN + ADP + H(+). It carries out the reaction FMN + ATP + H(+) = FAD + diphosphate. Its pathway is cofactor biosynthesis; FAD biosynthesis; FAD from FMN: step 1/1. It participates in cofactor biosynthesis; FMN biosynthesis; FMN from riboflavin (ATP route): step 1/1. Catalyzes the phosphorylation of riboflavin to FMN followed by the adenylation of FMN to FAD. The protein is Bifunctional riboflavin kinase/FMN adenylyltransferase (ribC) of Bacillus subtilis (strain 168).